Consider the following 404-residue polypeptide: AT-hook motif nuclear-localized protein 6 (404 aa).

The segment at 40–112 (TTVVTPLPPP…TPISSSIPLS (73 aa)) is disordered. Residues 45–55 (PLPPPPAPSSA) are compositionally biased toward pro residues. Low complexity predominate over residues 56-70 (PVPTTVTPGSATAST). Positions 76–84 (KKKRGRPRK) match the Bipartite nuclear localization signal motif. The segment at residues 76–88 (KKKRGRPRKYAPD) is a DNA-binding region (a.T hook). The span at 98 to 112 (PTLSPTPISSSIPLS) shows a compositional bias: low complexity. The PPC domain maps to 157 to 299 (GANFTTHQFT…RVMEAFAPPQ (143 aa)). A disordered region spans residues 365 to 404 (AYHGYGNMNTGTTHKEEHEDEDGGDDDDDSGDTRSQSHSG). Residues 382-394 (HEDEDGGDDDDDS) are compositionally biased toward acidic residues.

It localises to the nucleus. Transcription factor that specifically binds AT-rich DNA sequences related to the nuclear matrix attachment regions (MARs). This chain is AT-hook motif nuclear-localized protein 6, found in Arabidopsis thaliana (Mouse-ear cress).